We begin with the raw amino-acid sequence, 171 residues long: Endoribonuclease YbeY (171 aa).

Zn(2+)-binding residues include His126, His130, and His136.

It belongs to the endoribonuclease YbeY family. It depends on Zn(2+) as a cofactor.

It localises to the cytoplasm. Functionally, single strand-specific metallo-endoribonuclease involved in late-stage 70S ribosome quality control and in maturation of the 3' terminus of the 16S rRNA. The protein is Endoribonuclease YbeY of Rhizobium johnstonii (strain DSM 114642 / LMG 32736 / 3841) (Rhizobium leguminosarum bv. viciae).